A 181-amino-acid chain; its full sequence is Ubiquitin-like protein 4B (181 aa).

The 76-residue stretch at 1–76 folds into the Ubiquitin-like domain; the sequence is MWLTVKLLLG…LNVIIRPLEK (76 aa). Residues 139–181 are disordered; it reads PEGKHSGATGSTRESKGDMEPRRNMKCNLAHKDGFKREKSPGK. Basic and acidic residues-rich tracts occupy residues 151–161 and 168–181; these read RESKGDMEPRR and AHKDGFKREKSPGK.

It is found in the cytoplasm. The chain is Ubiquitin-like protein 4B (UBL4B) from Monodelphis domestica (Gray short-tailed opossum).